Here is a 593-residue protein sequence, read N- to C-terminus: Trehalose synthase/amylase TreS (593 aa).

Residue Asp90 coordinates substrate. Position 132 (Asn132) interacts with Ca(2+). Substrate-binding residues include His133 and Gln198. Asp200 lines the Ca(2+) pocket. Arg228 lines the substrate pocket. The active-site Nucleophile is the Asp230. The Ca(2+) site is built by Tyr234, Leu235, and Glu237. The active-site Proton donor is the Glu272. The substrate site is built by His341 and Asp342.

Belongs to the glycosyl hydrolase 13 family. TreS subfamily. In terms of assembly, homohexamer.

The catalysed reaction is D-maltose = alpha,alpha-trehalose. It carries out the reaction Endohydrolysis of (1-&gt;4)-alpha-D-glucosidic linkages in polysaccharides containing three or more (1-&gt;4)-alpha-linked D-glucose units.. It functions in the pathway glycan biosynthesis; glycogen biosynthesis. The amylase activity is stimulated by addition of Ca(2+), but this cation and other divalent cations inhibit the trehalose synthase activity. In addition, trehalose synthase activity, but not amylase activity, is strongly inhibited, and in a competitive manner, by validoxylamine. On the other hand, amylase, but not trehalose synthase activity, is inhibited by the known transition-state amylase inhibitor, acarbose, suggesting the possibility of two different active sites. Other metal ions such as Mg(2+), Mn(2+), and Co(2+) are also somewhat effective in the stimulation of amylase activity, but Hg(2+), Cu(2+), Ni(2+) and Zn(2+) are inhibitory. Its function is as follows. Catalyzes the reversible interconversion of maltose and trehalose by transglucosylation. Maltose is the preferred substrate. To a lesser extent, also displays amylase activity, catalyzing the endohydrolysis of (1-&gt;4)-alpha-D-glucosidic linkages in glycogen and maltooligosaccharides such as maltoheptaose, to produce maltose which then can be converted to trehalose. TreS plays a key role in the utilization of trehalose for the production of glycogen and alpha-glucan via the TreS-Pep2 branch involved in the biosynthesis of maltose-1-phosphate (M1P). Might also function as a sensor and/or regulator of trehalose levels within the cell. Thus, when trehalose levels in the cell become dangerously low, TreS can expedite the conversion of glycogen to maltose via its amylase activity and then convert the maltose to trehalose; but this enzyme also can expedite or promote the conversion of trehalose to glycogen when cytoplasmic trehalose levels become too high. Is also able to catalyze the hydrolytic cleavage of alpha-aryl glucosides, as well as alpha-glucosyl fluoride in vitro. The polypeptide is Trehalose synthase/amylase TreS (Mycolicibacterium smegmatis (strain ATCC 700084 / mc(2)155) (Mycobacterium smegmatis)).